The sequence spans 239 residues: ATP synthase subunit a (239 aa).

The next 6 membrane-spanning stretches (helical) occupy residues phenylalanine 31 to glycine 51, valine 91 to isoleucine 111, alanine 125 to valine 145, phenylalanine 151 to isoleucine 171, isoleucine 194 to phenylalanine 214, and threonine 215 to isoleucine 235.

Belongs to the ATPase A chain family. In terms of assembly, F-type ATPases have 2 components, CF(1) - the catalytic core - and CF(0) - the membrane proton channel. CF(1) has five subunits: alpha(3), beta(3), gamma(1), delta(1), epsilon(1). CF(0) has three main subunits: a(1), b(2) and c(9-12). The alpha and beta chains form an alternating ring which encloses part of the gamma chain. CF(1) is attached to CF(0) by a central stalk formed by the gamma and epsilon chains, while a peripheral stalk is formed by the delta and b chains.

It localises to the cell inner membrane. Functionally, key component of the proton channel; it plays a direct role in the translocation of protons across the membrane. The protein is ATP synthase subunit a of Syntrophobacter fumaroxidans (strain DSM 10017 / MPOB).